Consider the following 153-residue polypeptide: Large ribosomal subunit protein bL9 (153 aa).

It belongs to the bacterial ribosomal protein bL9 family.

Binds to the 23S rRNA. The polypeptide is Large ribosomal subunit protein bL9 (Mycoplasma mycoides subsp. mycoides SC (strain CCUG 32753 / NCTC 10114 / PG1)).